The primary structure comprises 159 residues: 6,7-dimethyl-8-ribityllumazine synthase (159 aa).

Residues Phe22, Ala56–Glu58, and Ala80–Ile82 each bind 5-amino-6-(D-ribitylamino)uracil. Ala85–Thr86 contacts (2S)-2-hydroxy-3-oxobutyl phosphate. Residue His88 is the Proton donor of the active site. Residue Phe113 coordinates 5-amino-6-(D-ribitylamino)uracil. Arg127 contacts (2S)-2-hydroxy-3-oxobutyl phosphate.

It belongs to the DMRL synthase family.

It carries out the reaction (2S)-2-hydroxy-3-oxobutyl phosphate + 5-amino-6-(D-ribitylamino)uracil = 6,7-dimethyl-8-(1-D-ribityl)lumazine + phosphate + 2 H2O + H(+). It functions in the pathway cofactor biosynthesis; riboflavin biosynthesis; riboflavin from 2-hydroxy-3-oxobutyl phosphate and 5-amino-6-(D-ribitylamino)uracil: step 1/2. Catalyzes the formation of 6,7-dimethyl-8-ribityllumazine by condensation of 5-amino-6-(D-ribitylamino)uracil with 3,4-dihydroxy-2-butanone 4-phosphate. This is the penultimate step in the biosynthesis of riboflavin. The sequence is that of 6,7-dimethyl-8-ribityllumazine synthase from Lactiplantibacillus plantarum (strain ATCC BAA-793 / NCIMB 8826 / WCFS1) (Lactobacillus plantarum).